The following is a 237-amino-acid chain: Demethylmenaquinone methyltransferase (237 aa).

S-adenosyl-L-methionine-binding positions include threonine 58, aspartate 79, and asparagine 106 to alanine 107.

This sequence belongs to the class I-like SAM-binding methyltransferase superfamily. MenG/UbiE family.

It catalyses the reaction a 2-demethylmenaquinol + S-adenosyl-L-methionine = a menaquinol + S-adenosyl-L-homocysteine + H(+). It functions in the pathway quinol/quinone metabolism; menaquinone biosynthesis; menaquinol from 1,4-dihydroxy-2-naphthoate: step 2/2. Its function is as follows. Methyltransferase required for the conversion of demethylmenaquinol (DMKH2) to menaquinol (MKH2). The protein is Demethylmenaquinone methyltransferase of Bacillus mycoides (strain KBAB4) (Bacillus weihenstephanensis).